A 1311-amino-acid chain; its full sequence is MAATNEVIPTSENPSDVSGSSQKLATEETALANGVDHEEEDSGEAGGEVFQLTVVLPREPHKIPIIVSSQEAIHDVRQSIIELPGTFQYSCFHLEHKGERINDFVQISEVPGLTADSEIHLVEDPYTEKEARIHIVRVRELIGAAGDRTDTLNGIISGVSLLDSVTSAESTQNGTSTAPSHPMVGFDFQASGTLSTLLPKAQEPGPKTIKSISVSPWNPPPYHLRQKGHLLYLQVTTNEGEQFQITSHVSGFYVNKSSTGKFDPSPKSAPKAHSAHSLLALLGDLSPSFEDSFKRLQEYNNTKEPLATFQITNATPSNPWIVPSASAPLVAHQADITRTQENYLIAGIENSETLRDWNEEFQSTRELPKETVQDRVFRERLTSKLFADYNDAAARGAILVARGEIAPLNPTEGKDAQIFVYNNVFFSFGADGVGTFASEGGDEAARAAVGKDVMGVRMVNQLDIDGLFTPGTVVVDYLGKRIVGQSIVPGIFKQRDPGENQIDYGAVDGKDIVASDEKFVSVFEKLSKALKVKKHAVWDKDGKRHDLEGSIETKGLLGTDGRKYVLDLYRVTPLDITWMEEVGTALDSPKEADVASESAYPHRMTVIRPELVEAYWKVKMREWVNGELERKRQAQKTIEPTAEEKEPGAVAEASEASKSDEPTENGELAKKADESDKDAEPSKPAADQERIDIGDFKFALNPDAFSGQQPQTDEEKAEFAEDEQQVRLVCEFLRKTVLPELVNDLKEGDVGFPMDGQSLSRLLHKRGINIRYLGQVATLADGKRLESLRILAVQEMVSRAFKHVAGNYLRYLPIPLTSSCIAHLLNCLLGTDLNATPKPDVDEAMAALYPDADLKFKEVSPESLKRDIEAQILRRFRYTLDSTWTAAIKHLQLLREVSLKLGIQLEMKPYHFTKQSQTEAAAAPPTTNGEATKDAAPTGKSTNGKKKKKNAREGSPASITSVNASSPVTFNPDDILNTVPVIKEASPRSSLAEEALEAGRISLLQDQKKLGQELLLESLSLHEQIYGILHPEVARVYNSLSMLYYQLDEKEAAMELARKAVIVSERTLGVDNAETLLNYLNLGLIAHASGETKLALTYIKHALDLWKVVYGPNHPDSITTINNAAVMLQHLKEYHDSRTWFEASLKICEEVYGKHSINAATLLFQLAQALALDQDSKSAVNRMRESYNIFLTELGAEDKNTKEAEKWLEQLTQNAVSIAKHAKDVQARRNRAGIRVSPRVTLGQTQLQPQVGQTAEAAAGRDSRSSRGLDSRSIDELLKFIEGSDQANKNKKRPGRSNPKRRGGAAAAAGK.

Positions 1–46 are disordered; the sequence is MAATNEVIPTSENPSDVSGSSQKLATEETALANGVDHEEEDSGEAG. Polar residues predominate over residues 7 to 24; that stretch reads VIPTSENPSDVSGSSQKL. Residues 335–579 form the Clu domain; it reads DITRTQENYL…RVTPLDITWM (245 aa). Disordered stretches follow at residues 629–691 and 915–965; these read ERKR…QERI and QSQT…VNAS. Over residues 655–691 the composition is skewed to basic and acidic residues; the sequence is EASKSDEPTENGELAKKADESDKDAEPSKPAADQERI. The segment covering 915–930 has biased composition (polar residues); sequence QSQTEAAAAPPTTNGE. 3 TPR repeats span residues 1034–1067, 1076–1109, and 1118–1151; these read ARVYNSLSMLYYQLDEKEAAMELARKAVIVSERT, LLNYLNLGLIAHASGETKLALTYIKHALDLWKVV, and ITTINNAAVMLQHLKEYHDSRTWFEASLKICEEV. A disordered region spans residues 1236–1311; the sequence is VSPRVTLGQT…RGGAAAAAGK (76 aa). Polar residues predominate over residues 1242-1253; sequence LGQTQLQPQVGQ. Positions 1259–1279 are enriched in basic and acidic residues; it reads AGRDSRSSRGLDSRSIDELLK. Residues 1289–1303 show a composition bias toward basic residues; that stretch reads KNKKRPGRSNPKRRG.

Belongs to the CLU family. As to quaternary structure, may associate with the eukaryotic translation initiation factor 3 (eIF-3) complex.

Its subcellular location is the cytoplasm. MRNA-binding protein involved in proper cytoplasmic distribution of mitochondria. This chain is Clustered mitochondria protein homolog, found in Sclerotinia sclerotiorum (strain ATCC 18683 / 1980 / Ss-1) (White mold).